A 355-amino-acid chain; its full sequence is Guanine nucleotide-binding protein G(o) subunit alpha (355 aa).

Residues 1–17 (MGCASSAEERAAPSAQQ) show a composition bias toward low complexity. A disordered region spans residues 1 to 24 (MGCASSAEERAAPSAQQADREKLK). A lipid anchor (N-myristoyl glycine) is attached at G2. Residue C3 is the site of S-palmitoyl cysteine attachment. The 324-residue stretch at 32-355 (KDIKLLLLGA…ANNLRGCGLY (324 aa)) folds into the G-alpha domain. A G1 motif region spans residues 35-48 (KLLLLGAGESGKST). Residues 40–47 (GAGESGKS), 176–182 (LRTRVKT), 201–205 (DVGRG), 201–206 (DVGRGQ), 271–274 (NKKD), and A327 contribute to the GTP site. S47 and T182 together coordinate Mg(2+). The G2 motif stretch occupies residues 174-182 (DILRTRVKT). Residues 197-206 (FKLFDVGRGQ) form a G3 motif region. Positions 267-274 (ILFLNKKD) are G4 motif. Positions 326 to 330 (TATDT) are G5 motif.

This sequence belongs to the G-alpha family. G(i/o/t/z) subfamily. In terms of assembly, g proteins are composed of 3 units; alpha, beta and gamma. The alpha chain contains the guanine nucleotide binding site.

Functionally, guanine nucleotide-binding proteins (G proteins) are involved as modulators or transducers in various transmembrane signaling systems. The G(o) protein function is not clear. The protein is Guanine nucleotide-binding protein G(o) subunit alpha of Manduca sexta (Tobacco hawkmoth).